The chain runs to 141 residues: Nucleoside diphosphate kinase (141 aa).

ATP contacts are provided by Lys-9, Phe-57, Arg-85, Thr-91, Arg-102, and Asn-112. The active-site Pros-phosphohistidine intermediate is the His-115.

Belongs to the NDK family. Homotetramer. The cofactor is Mg(2+).

It is found in the cytoplasm. It carries out the reaction a 2'-deoxyribonucleoside 5'-diphosphate + ATP = a 2'-deoxyribonucleoside 5'-triphosphate + ADP. The enzyme catalyses a ribonucleoside 5'-diphosphate + ATP = a ribonucleoside 5'-triphosphate + ADP. Its function is as follows. Major role in the synthesis of nucleoside triphosphates other than ATP. The ATP gamma phosphate is transferred to the NDP beta phosphate via a ping-pong mechanism, using a phosphorylated active-site intermediate. The polypeptide is Nucleoside diphosphate kinase (Chlamydia trachomatis serovar A (strain ATCC VR-571B / DSM 19440 / HAR-13)).